The chain runs to 115 residues: Ribonuclease P protein component (115 aa).

Belongs to the RnpA family. In terms of assembly, consists of a catalytic RNA component (M1 or rnpB) and a protein subunit.

The catalysed reaction is Endonucleolytic cleavage of RNA, removing 5'-extranucleotides from tRNA precursor.. Functionally, RNaseP catalyzes the removal of the 5'-leader sequence from pre-tRNA to produce the mature 5'-terminus. It can also cleave other RNA substrates such as 4.5S RNA. The protein component plays an auxiliary but essential role in vivo by binding to the 5'-leader sequence and broadening the substrate specificity of the ribozyme. The chain is Ribonuclease P protein component from Bacillus cereus (strain B4264).